We begin with the raw amino-acid sequence, 507 residues long: O-fucosyltransferase 30 (507 aa).

Residues 26–46 (AIFLCSVSILVVFFIVVFFIT) form a helical; Signal-anchor for type II membrane protein membrane-spanning segment. N110, N146, N398, and N410 each carry an N-linked (GlcNAc...) asparagine glycan.

The protein belongs to the glycosyltransferase GT106 family.

The protein localises to the membrane. The protein operates within glycan metabolism. In Arabidopsis thaliana (Mouse-ear cress), this protein is O-fucosyltransferase 30.